Reading from the N-terminus, the 53-residue chain is ATP synthase protein 8 (53 aa).

A helical transmembrane segment spans residues 9–29 (WIFFLFFFICIFLIFNIMNYF).

The protein belongs to the ATPase protein 8 family. F-type ATPases have 2 components, CF(1) - the catalytic core - and CF(0) - the membrane proton channel.

Its subcellular location is the mitochondrion membrane. Mitochondrial membrane ATP synthase (F(1)F(0) ATP synthase or Complex V) produces ATP from ADP in the presence of a proton gradient across the membrane which is generated by electron transport complexes of the respiratory chain. F-type ATPases consist of two structural domains, F(1) - containing the extramembraneous catalytic core and F(0) - containing the membrane proton channel, linked together by a central stalk and a peripheral stalk. During catalysis, ATP synthesis in the catalytic domain of F(1) is coupled via a rotary mechanism of the central stalk subunits to proton translocation. Part of the complex F(0) domain. Minor subunit located with subunit a in the membrane. This is ATP synthase protein 8 (mt:ATPase8) from Bombyx mori (Silk moth).